A 396-amino-acid chain; its full sequence is Flavohemoprotein (396 aa).

The region spanning 1–136 (MLDTQTIAIV…LADVFIQRES (136 aa)) is the Globin domain. Histidine 85 provides a ligand contact to heme b. Active-site charge relay system residues include tyrosine 95 and glutamate 135. Residues 147-396 (GGWRTLRRFR…YECFGPHKVI (250 aa)) form a reductase region. Residues 150-255 (RTLRRFRIIK…APPRGDFFLD (106 aa)) enclose the FAD-binding FR-type domain. FAD is bound by residues tyrosine 188 and 204–207 (RQYS). 268-273 (GVGQTP) contributes to the NADP(+) binding site. Residue 389–392 (CFGP) coordinates FAD.

It belongs to the globin family. Two-domain flavohemoproteins subfamily. This sequence in the C-terminal section; belongs to the flavoprotein pyridine nucleotide cytochrome reductase family. Requires heme b as cofactor. It depends on FAD as a cofactor.

The enzyme catalyses 2 nitric oxide + NADPH + 2 O2 = 2 nitrate + NADP(+) + H(+). It catalyses the reaction 2 nitric oxide + NADH + 2 O2 = 2 nitrate + NAD(+) + H(+). Its function is as follows. Is involved in NO detoxification in an aerobic process, termed nitric oxide dioxygenase (NOD) reaction that utilizes O(2) and NAD(P)H to convert NO to nitrate, which protects the bacterium from various noxious nitrogen compounds. Therefore, plays a central role in the inducible response to nitrosative stress. This chain is Flavohemoprotein, found in Yersinia pestis.